The following is a 401-amino-acid chain: Imidazolonepropionase (401 aa).

The Fe(3+) site is built by His66 and His68. Zn(2+) contacts are provided by His66 and His68. Residues Arg75, Tyr138, and His171 each contribute to the 4-imidazolone-5-propanoate site. Residue Tyr138 coordinates N-formimidoyl-L-glutamate. His236 provides a ligand contact to Fe(3+). His236 is a Zn(2+) binding site. Gln239 is a binding site for 4-imidazolone-5-propanoate. Asp311 contacts Fe(3+). Asp311 is a Zn(2+) binding site. N-formimidoyl-L-glutamate-binding residues include Asn313 and Gly315. Thr316 is a binding site for 4-imidazolone-5-propanoate.

It belongs to the metallo-dependent hydrolases superfamily. HutI family. It depends on Zn(2+) as a cofactor. Requires Fe(3+) as cofactor.

The protein localises to the cytoplasm. The catalysed reaction is 4-imidazolone-5-propanoate + H2O = N-formimidoyl-L-glutamate. It participates in amino-acid degradation; L-histidine degradation into L-glutamate; N-formimidoyl-L-glutamate from L-histidine: step 3/3. Functionally, catalyzes the hydrolytic cleavage of the carbon-nitrogen bond in imidazolone-5-propanoate to yield N-formimidoyl-L-glutamate. It is the third step in the universal histidine degradation pathway. This is Imidazolonepropionase from Pseudomonas syringae pv. tomato (strain ATCC BAA-871 / DC3000).